Consider the following 539-residue polypeptide: Probable quinate permease (539 aa).

Over 1–22 (MSILSMVEDRPTPKEVYNWRIY) the chain is Cytoplasmic. Residues 23–43 (LLAAVASFTSCMIGYDSAFIG) traverse the membrane as a helical segment. The Extracellular portion of the chain corresponds to 44 to 74 (TTISLDSFKNEFHWDSMSTAKQNLVSANIVS). The chain crosses the membrane as a helical span at residues 75–95 (CYQAGAFFGAFFAYPIGHFWG). At 96–97 (RK) the chain is on the cytoplasmic side. Residues 98–118 (WGLMLSALVFTLGAGLMLGAN) form a helical membrane-spanning segment. The Extracellular segment spans residues 119–130 (GDRGLGLIYGGR). A helical membrane pass occupies residues 131–151 (VLAGLGVGAGSNFTPIYISEL). At 152–159 (APPAIRGR) the chain is on the cytoplasmic side. The helical transmembrane segment at 160–180 (LVGVYELGWQVGGLVGFWINY) threads the bilayer. The Extracellular segment spans residues 181-193 (GVEQTMAPSHKQW). The chain crosses the membrane as a helical span at residues 194–214 (LIPFAVQLIPAGLLIIGILFV). The Cytoplasmic segment spans residues 215–285 (KESPRWLFLR…AWTNKRILYR (71 aa)). A helical membrane pass occupies residues 286-306 (LFLGSMLFFWQNGSGINAINY). The Extracellular segment spans residues 307 to 325 (YSPTVFKSIGLKGNSSSLL). A helical transmembrane segment spans residues 326-346 (TTGIFGVVKTVVTIVWLLYLI). The Cytoplasmic portion of the chain corresponds to 347–352 (DHVGRR). The chain crosses the membrane as a helical span at residues 353 to 373 (LLLLIGAAGGSICMWIVGAYI). Residues 374–387 (KVVDPTHNQSDHLN) lie on the Extracellular side of the membrane. The helical transmembrane segment at 388 to 408 (GGGVAAIFFFYLWTAFYTPSW) threads the bilayer. Residues 409–456 (NGTPWVINSEMFDPNIRSLAQACAAGSNWLWNFLISRFTPQMFAKMDY) lie on the Cytoplasmic side of the membrane. The helical transmembrane segment at 457 to 477 (GVYFFFASLMLLSIPFVFFLV) threads the bilayer. Residues 478-539 (PETKGIPLEN…EQVEDTDRKE (62 aa)) are Extracellular-facing.

It belongs to the major facilitator superfamily. Sugar transporter (TC 2.A.1.1) family. In terms of assembly, interacts with creB. Post-translationally, ubiquitinated. Deubiquitinated by creB, probably to control its activity or amount.

It is found in the cell membrane. Functionally, integral membrane transporter that imports quinic acid to be catabolized as a carbon source. In Aspergillus niger (strain ATCC MYA-4892 / CBS 513.88 / FGSC A1513), this protein is Probable quinate permease (qutD).